The sequence spans 246 residues: uncharacterized protein (246 aa).

An NADP(+)-binding site is contributed by 10-34 (VITGASSGIGEETVNLLSENGAKLV). Position 140 (serine 140) interacts with substrate. The active-site Proton acceptor is tyrosine 153.

Belongs to the short-chain dehydrogenases/reductases (SDR) family.

This is an uncharacterized protein from Staphylococcus saprophyticus subsp. saprophyticus (strain ATCC 15305 / DSM 20229 / NCIMB 8711 / NCTC 7292 / S-41).